Consider the following 210-residue polypeptide: Prolactin (210 aa).

Residues 1-23 (MTQGSRLYFAVAVLMCGFVSING) form the signal peptide. 2 cysteine pairs are disulfide-bonded: C69/C183 and C200/C210.

This sequence belongs to the somatotropin/prolactin family. Pituitary gland.

It localises to the secreted. The sequence is that of Prolactin (prl1) from Carassius auratus (Goldfish).